The following is a 25-amino-acid chain: Neuromedin-U-25 (25 aa).

Asparagine amide is present on asparagine 25.

The protein belongs to the NmU family.

It localises to the secreted. Its function is as follows. Stimulates uterine smooth muscle contraction and causes selective vasoconstriction. The chain is Neuromedin-U-25 (NMU) from Gallus gallus (Chicken).